A 373-amino-acid chain; its full sequence is MTAPNHPPGRTRVAVVYGGRSSEHAISCVSAGSILRNLDPERFEVVAIGITPDGSWVLTDGRPETLAITDGKLPAVTEASGTELALPAAPNRSGQLLALGNGPGEILAAVDVVFPVLHGPYGEDGTIQGLLELAGVPYVGSGVLASAAGMDKEYTKKLLAAEGLPIGDQVVLRPGVETLDLEQRERLGLPVFVKPARGGSSIGVSRVTAWDELPAAVALARRHDPKVIVEAAVIGRELECGVLEFPDGRLEASTVGEIRVAGVRGREDGFYDFATKYLEDAAELDVPAKVDDDVADEIRQLAVRAFTAIGCQGLARVDFFLTDDGPVINEINTMPGFTTISMYPRMWAAGGIDYPTLLAAMVDTAIARGTGLR.

In terms of domain architecture, ATP-grasp spans 156–363 (KKLLAAEGLP…YPTLLAAMVD (208 aa)). Residue 184 to 239 (RERLGLPVFVKPARGGSSIGVSRVTAWDELPAAVALARRHDPKVIVEAAVIGRELE) participates in ATP binding. Mg(2+) contacts are provided by Asp318, Glu330, and Asn332.

Belongs to the D-alanine--D-alanine ligase family. Mg(2+) is required as a cofactor. Mn(2+) serves as cofactor.

It is found in the cytoplasm. It carries out the reaction 2 D-alanine + ATP = D-alanyl-D-alanine + ADP + phosphate + H(+). It functions in the pathway cell wall biogenesis; peptidoglycan biosynthesis. In terms of biological role, cell wall formation. The chain is D-alanine--D-alanine ligase from Mycolicibacterium smegmatis (strain ATCC 700084 / mc(2)155) (Mycobacterium smegmatis).